The chain runs to 392 residues: Ameloblastin (392 aa).

A signal peptide spans 1-26; it reads MPALKIPLFKMKDMILILCLLKMSSA. Residue Pro-37 is modified to Hydroxyproline. Position 43 is a phosphoserine (Ser-43). Disordered regions lie at residues 86-109, 247-280, and 349-392; these read FPWM…PGQK, TLEF…LADP, and TTLG…FQEP. Low complexity predominate over residues 97–109; the sequence is QQPSLQPQQPGQK. The span at 359–381 shows a compositional bias: polar residues; it reads VDSTATPDTQHTLMPRNKAQQPQ. Positions 382-392 are enriched in basic and acidic residues; that stretch reads IKHDAWHFQEP.

This sequence belongs to the ameloblastin family.

Its subcellular location is the secreted. It is found in the extracellular space. It localises to the extracellular matrix. In terms of biological role, involved in the mineralization and structural organization of enamel. The chain is Ameloblastin (AMBN) from Bos taurus (Bovine).